Here is a 472-residue protein sequence, read N- to C-terminus: Argininosuccinate lyase (472 aa).

It belongs to the lyase 1 family. Argininosuccinate lyase subfamily.

It localises to the cytoplasm. It catalyses the reaction 2-(N(omega)-L-arginino)succinate = fumarate + L-arginine. The protein operates within amino-acid biosynthesis; L-arginine biosynthesis; L-arginine from L-ornithine and carbamoyl phosphate: step 3/3. The chain is Argininosuccinate lyase from Polynucleobacter necessarius subsp. necessarius (strain STIR1).